A 181-amino-acid polypeptide reads, in one-letter code: MGLFASKLFSNLFGNKEMRILMVGLDGAGKTTVLYKLKLGEVITTIPTIGFNVETVQYKNISFTVWDVGGQDRIRSLWRHYYRNTEGVIFVVDSNDRSRIGEAREVMQRMLNEDELRNAAWLVFANKQDLPEAMSAAEITEKLGLHSIRNRPWFIQATCATSGEGLYEGLEWLSNSLKNST.

Residue Gly-2 is the site of N-myristoyl glycine attachment. GTP-binding positions include 25–32 (LDGAGKTT), Thr-48, Gly-70, 126–129 (NKQD), and 160–161 (AT). Residue Lys-127 forms a Glycyl lysine isopeptide (Lys-Gly) (interchain with G-Cter in ubiquitin) linkage.

It belongs to the small GTPase superfamily. Arf family. As to quaternary structure, interacts with RUD3. Interacts with VPS13 (via C-terminal part); the interaction is direct.

The protein resides in the golgi apparatus. It catalyses the reaction GTP + H2O = GDP + phosphate + H(+). Functionally, GTP-binding protein involved in Golgi vesicle trafficking. May modulate vesicle budding and uncoating within the Golgi apparatus. May recruit the lipid transfer protein VPS13 to Golgi membranes. Recruits polyadenylate-binding protein PAB1 to COPI vesicles, and this is required for correct localization of the asymmetrically distributed ASH1 mRNA. This is ADP-ribosylation factor 1 (ARF1) from Saccharomyces cerevisiae (strain ATCC 204508 / S288c) (Baker's yeast).